The chain runs to 258 residues: Acyl-[acyl-carrier-protein]--UDP-N-acetylglucosamine O-acyltransferase (258 aa).

Belongs to the transferase hexapeptide repeat family. LpxA subfamily. Homotrimer.

The protein localises to the cytoplasm. The catalysed reaction is a (3R)-hydroxyacyl-[ACP] + UDP-N-acetyl-alpha-D-glucosamine = a UDP-3-O-[(3R)-3-hydroxyacyl]-N-acetyl-alpha-D-glucosamine + holo-[ACP]. It participates in glycolipid biosynthesis; lipid IV(A) biosynthesis; lipid IV(A) from (3R)-3-hydroxytetradecanoyl-[acyl-carrier-protein] and UDP-N-acetyl-alpha-D-glucosamine: step 1/6. In terms of biological role, involved in the biosynthesis of lipid A, a phosphorylated glycolipid that anchors the lipopolysaccharide to the outer membrane of the cell. This is Acyl-[acyl-carrier-protein]--UDP-N-acetylglucosamine O-acyltransferase from Thiobacillus denitrificans (strain ATCC 25259 / T1).